A 418-amino-acid chain; its full sequence is Putative F-box protein At3g23950 (418 aa).

In terms of domain architecture, F-box spans 1–42 (MNIPPELTFEVLVRLPLKSLARFRSMCKEWKLVIDSEFFRDC).

This is Putative F-box protein At3g23950 from Arabidopsis thaliana (Mouse-ear cress).